Consider the following 410-residue polypeptide: Tryptophan synthase beta chain (410 aa).

Lysine 98 bears the N6-(pyridoxal phosphate)lysine mark.

It belongs to the TrpB family. As to quaternary structure, tetramer of two alpha and two beta chains. It depends on pyridoxal 5'-phosphate as a cofactor.

The enzyme catalyses (1S,2R)-1-C-(indol-3-yl)glycerol 3-phosphate + L-serine = D-glyceraldehyde 3-phosphate + L-tryptophan + H2O. The protein operates within amino-acid biosynthesis; L-tryptophan biosynthesis; L-tryptophan from chorismate: step 5/5. In terms of biological role, the beta subunit is responsible for the synthesis of L-tryptophan from indole and L-serine. This Roseobacter denitrificans (strain ATCC 33942 / OCh 114) (Erythrobacter sp. (strain OCh 114)) protein is Tryptophan synthase beta chain.